The sequence spans 235 residues: Venom metalloproteinase antarease-like TserMP_B (235 aa).

One can recognise a Peptidase M12B domain in the interval 4 to 233 (IVVEYYIVTD…PTASCIFQQC (230 aa)). Residues C137 and C228 are joined by a disulfide bond. H161 provides a ligand contact to Zn(2+). Residue E162 is part of the active site. Zn(2+) contacts are provided by H165 and H171.

This sequence belongs to the venom metalloproteinase (M12B) family. It depends on Zn(2+) as a cofactor. In terms of tissue distribution, expressed by the venom gland.

Its subcellular location is the secreted. Its activity is regulated as follows. Inhibited by EDTA. Functionally, acts as a metalloprotease. Penetrates intact tissue and specifically cleaves the vesicle-associated membrane protein 2 (VAMP2) (part of the SNARE complex) involved in pancreatic secretion, thus disrupting the normal vesicular traffic. This chain is Venom metalloproteinase antarease-like TserMP_B, found in Tityus serrulatus (Brazilian scorpion).